The chain runs to 282 residues: MANQLILLKKDFFTDEQQAVTVADRYPQDVFAEHTHEFCELVMVWRGNGLHVLNERPYRITRGDLFYIRAEDKHSYTSVNDLVLQNIIYCPERLKLNVNWQAMIPGFQGAQWHPHWRLGSMGMNQARQVINQLEHESNGRDPLANEMAELLFGQLVMTLKRHRYATDDLPATSRETLLDKLITALANSLERPFALDAFCQQEQCSERVLRQQFRAQTGMTINQYLRQVRICHAQYLLQHSPLMISEISMQCGFEDSNYFSVVFTRETGMTPSQWRHLSNQSD.

Residues 179–277 (DKLITALANS…GMTPSQWRHL (99 aa)) form the HTH araC/xylS-type domain. 2 DNA-binding regions (H-T-H motif) span residues 196–217 (DAFC…RAQT) and 244–267 (ISEI…TRET).

As to quaternary structure, binds DNA as a dimer.

Its subcellular location is the cytoplasm. Functionally, activates expression of the rhaSR operon in response to L-rhamnose. The sequence is that of HTH-type transcriptional activator RhaR from Salmonella schwarzengrund (strain CVM19633).